The chain runs to 729 residues: Monosaccharide-sensing protein 2 (729 aa).

The next 6 membrane-spanning stretches (helical) occupy residues 1-21 (MSGA…QGWD), 47-67 (LIVA…GGVA), 81-101 (ILYF…VLLL), 104-124 (LLDG…ISET), 139-159 (FTGS…SLMP), and 165-185 (LMLG…VFFL). Positions 347–363 (VGEGEDYPSDHGDDSED) are enriched in acidic residues. Disordered stretches follow at residues 347–367 (VGEG…DLHS) and 423–442 (ERED…RRGS). Basic and acidic residues predominate over residues 423-434 (EREDESGQKEEG). A phosphoserine mark is found at S438 and G448. Helical transmembrane passes span 507-527 (ALVV…NGVL), 553-573 (ASLL…AVAM), 585-605 (LLTT…SNLV), 610-630 (IVHA…FVMG), 650-670 (ICIA…TYSL), and 679-699 (LAGV…FVFI).

It belongs to the major facilitator superfamily. Sugar transporter (TC 2.A.1.1) family. Mostly expressed in roots and stems, and, to a lower extent, in juvenile and adult leaves, and in flower tissues.

It is found in the vacuole membrane. It carries out the reaction D-glucose(out) + H(+)(in) = D-glucose(in) + H(+)(out). It catalyses the reaction sucrose(out) + H(+)(in) = sucrose(in) + H(+)(out). Its function is as follows. Sugar proton-coupled antiporter which contributes to vacuolar sugar import (e.g. monosaccharides including glucose, sucrose and fructose), particularly during stress responses (e.g. in response to cold). This chain is Monosaccharide-sensing protein 2, found in Arabidopsis thaliana (Mouse-ear cress).